The sequence spans 120 residues: UPF0344 protein LMHCC_0278 (120 aa).

A run of 4 helical transmembrane segments spans residues 3-23 (GYIH…ALLI), 33-53 (MLQM…IMMV), 62-82 (ILAI…EMLL), and 92-112 (GMFL…GFYL).

This sequence belongs to the UPF0344 family.

The protein resides in the cell membrane. In Listeria monocytogenes serotype 4a (strain HCC23), this protein is UPF0344 protein LMHCC_0278.